Here is a 453-residue protein sequence, read N- to C-terminus: Tol-Pal system protein TolB (453 aa).

The signal sequence occupies residues 1-34 (MYLIIKKTHKLPHWLQKVSLSIMLIIFLWKPALL).

It belongs to the TolB family. The Tol-Pal system is composed of five core proteins: the inner membrane proteins TolA, TolQ and TolR, the periplasmic protein TolB and the outer membrane protein Pal. They form a network linking the inner and outer membranes and the peptidoglycan layer.

Its subcellular location is the periplasm. Part of the Tol-Pal system, which plays a role in outer membrane invagination during cell division and is important for maintaining outer membrane integrity. TolB occupies a key intermediary position in the Tol-Pal system because it communicates directly with both membrane-embedded components, Pal in the outer membrane and TolA in the inner membrane. The chain is Tol-Pal system protein TolB from Blochmanniella pennsylvanica (strain BPEN).